A 166-amino-acid polypeptide reads, in one-letter code: MSSKDFFACGHSGHWARGCPRGGAGGRRGGGHGRGSQCGSTTLSYTCYCCGESGRNAKNCVLLGNICYNCGRSGHIAKDCKDPKRERRQHCYTCGRLGHLARDCDRQKEQKCYSCGKLGHIQKDCAQVKCYRCGEIGHVAINCSKARPGQLLPLRQIPTSSQGMSQ.

Residues 4-21 (KDFFACGHSGHWARGCPR) form a CCHC-type 1; degenerate zinc finger. The segment at 45–62 (YTCYCCGESGRNAKNCVL) adopts a CCHC-type 2; degenerate zinc-finger fold. 4 consecutive CCHC-type zinc fingers follow at residues 65–82 (NICY…DCKD), 89–106 (QHCY…DCDR), 110–127 (QKCY…DCAQ), and 128–145 (VKCY…NCSK).

The polypeptide is Zinc finger CCHC domain-containing protein 13 (ZCCHC13) (Homo sapiens (Human)).